We begin with the raw amino-acid sequence, 1647 residues long: Probable ubiquitin fusion degradation protein C12B10.01c (1647 aa).

A compositionally biased stretch (polar residues) spans 192–209 (TYSDSSNYHTSTDSSQYN). Disordered stretches follow at residues 192–288 (TYSD…PSAA) and 1039–1076 (ESMSGSSRNSSGDYTDSMSQDAPNHTTEPSERRDSSTS). Composition is skewed to acidic residues over residues 218 to 228 (DTNDGTDDDIN) and 245 to 273 (ERDEDVDEEEEEDDDENNDEGDDEDENEN). Residues 1039-1050 (ESMSGSSRNSSG) are compositionally biased toward low complexity. Residues 1051-1065 (DYTDSMSQDAPNHTT) show a composition bias toward polar residues. Residues 1066-1076 (EPSERRDSSTS) are compositionally biased toward basic and acidic residues. The interval 1183-1257 (IENILTDFSN…SVSFLLSRNP (75 aa)) is K-box. The HECT domain maps to 1294-1647 (ATYAASENIL…LEGQGSFHLS (354 aa)). The active-site Glycyl thioester intermediate is Cys1614.

It belongs to the UPL family. K-HECT subfamily.

The catalysed reaction is S-ubiquitinyl-[E2 ubiquitin-conjugating enzyme]-L-cysteine + [acceptor protein]-L-lysine = [E2 ubiquitin-conjugating enzyme]-L-cysteine + N(6)-ubiquitinyl-[acceptor protein]-L-lysine.. Its function is as follows. E3 ubiquitin-protein ligase which accepts ubiquitin from an E2 ubiquitin-conjugating enzyme in the form of a thioester and then directly transfers the ubiquitin to targeted substrates. This Schizosaccharomyces pombe (strain 972 / ATCC 24843) (Fission yeast) protein is Probable ubiquitin fusion degradation protein C12B10.01c.